A 60-amino-acid polypeptide reads, in one-letter code: Small integral membrane protein 3 (60 aa).

A helical membrane pass occupies residues Ile20–Cys40.

Its subcellular location is the membrane. This is Small integral membrane protein 3 (SMIM3) from Homo sapiens (Human).